Consider the following 346-residue polypeptide: Acrosin (346 aa).

Positions 1–19 (MALLLPLAVLLAACRPGHG) are cleaved as a signal peptide. Disulfide bonds link cysteine 24–cysteine 146, cysteine 27–cysteine 154, cysteine 70–cysteine 86, cysteine 168–cysteine 240, cysteine 203–cysteine 219, and cysteine 230–cysteine 260. The region spanning 41–284 (VVGGTEALHG…FYNWILLQVR (244 aa)) is the Peptidase S1 domain. Histidine 85 serves as the catalytic Charge relay system. The N-linked (GlcNAc...) asparagine glycan is linked to asparagine 128. Aspartate 134 acts as the Charge relay system in catalysis. Residue asparagine 204 is glycosylated (N-linked (GlcNAc...) asparagine). Catalysis depends on serine 234, which acts as the Charge relay system. A propeptide spanning residues 266-346 (PGIYTSTQHF…LLQSLWGSKA (81 aa)) is cleaved from the precursor.

Belongs to the peptidase S1 family. As to quaternary structure, heavy chain (catalytic) and a light chain linked by two disulfide bonds. Glycosylated.

It carries out the reaction Preferential cleavage: Arg-|-Xaa, Lys-|-Xaa.. With respect to regulation, inhibited by aprotinin, ovomucoid, soybean trypsin inhibitor, benzamidine, p-aminobenzamidine, and zinc ions. Activity also inhibited by a Kazal-type proteinase inhibitor. Functionally, serine protease of trypsin-like cleavage specificity. Synthesized in a zymogen form, proacrosin and stored in the acrosome. This is Acrosin from Meleagris gallopavo (Wild turkey).